The sequence spans 1072 residues: Carbamoyl phosphate synthase large chain (1072 aa).

The segment at 1 to 401 (MPKRLDINTI…SLLKAVRSLE (401 aa)) is carboxyphosphate synthetic domain. Residues R129, R169, G175, G176, K208, I210, E215, G241, V242, H243, Q284, and E298 each contribute to the ATP site. Positions 133–327 (RTLMQELNEP…IAKLAAKIAV (195 aa)) constitute an ATP-grasp 1 domain. Residues Q284, E298, and N300 each contribute to the Mg(2+) site. Q284, E298, and N300 together coordinate Mn(2+). An oligomerization domain region spans residues 402-546 (LGVYHLELEH…YSTYGDENES (145 aa)). The segment at 547–929 (VRTDRKSVVV…ALYKGLVASG (383 aa)) is carbamoyl phosphate synthetic domain. The ATP-grasp 2 domain maps to 671-861 (EAALTQLGIP…MANVATKVIL (191 aa)). Residues R707, R746, E752, G777, V778, H779, S780, Q820, and E832 each coordinate ATP. Q820, E832, and N834 together coordinate Mg(2+). Mn(2+) contacts are provided by Q820, E832, and N834. The 143-residue stretch at 930–1072 (INIPTHGSVI…QTKRHEVVHA (143 aa)) folds into the MGS-like domain. Residues 930–1072 (INIPTHGSVI…QTKRHEVVHA (143 aa)) are allosteric domain.

This sequence belongs to the CarB family. As to quaternary structure, composed of two chains; the small (or glutamine) chain promotes the hydrolysis of glutamine to ammonia, which is used by the large (or ammonia) chain to synthesize carbamoyl phosphate. Tetramer of heterodimers (alpha,beta)4. The cofactor is Mg(2+). It depends on Mn(2+) as a cofactor.

The enzyme catalyses hydrogencarbonate + L-glutamine + 2 ATP + H2O = carbamoyl phosphate + L-glutamate + 2 ADP + phosphate + 2 H(+). It carries out the reaction hydrogencarbonate + NH4(+) + 2 ATP = carbamoyl phosphate + 2 ADP + phosphate + 2 H(+). It participates in amino-acid biosynthesis; L-arginine biosynthesis; carbamoyl phosphate from bicarbonate: step 1/1. The protein operates within pyrimidine metabolism; UMP biosynthesis via de novo pathway; (S)-dihydroorotate from bicarbonate: step 1/3. Its function is as follows. Large subunit of the glutamine-dependent carbamoyl phosphate synthetase (CPSase). CPSase catalyzes the formation of carbamoyl phosphate from the ammonia moiety of glutamine, carbonate, and phosphate donated by ATP, constituting the first step of 2 biosynthetic pathways, one leading to arginine and/or urea and the other to pyrimidine nucleotides. The large subunit (synthetase) binds the substrates ammonia (free or transferred from glutamine from the small subunit), hydrogencarbonate and ATP and carries out an ATP-coupled ligase reaction, activating hydrogencarbonate by forming carboxy phosphate which reacts with ammonia to form carbamoyl phosphate. In Bacillus cereus (strain G9842), this protein is Carbamoyl phosphate synthase large chain.